The chain runs to 488 residues: Nitrogen metabolite repression protein nmr (488 aa).

The tract at residues 1-45 (MPAEILSELPLRPAPRDIKIPNAMHNEERRHKHSRSSYSEMSPLM) is disordered. Basic and acidic residues predominate over residues 14–29 (APRDIKIPNAMHNEER). The span at 36-45 (SSYSEMSPLM) shows a compositional bias: polar residues. NADP(+)-binding positions include 71–76 (NAAGRQ), Asn165, Lys215, and 237–240 (YNNN). NAD(+)-binding positions include 75 to 76 (RQ), 165 to 167 (NTT), Lys215, and 237 to 240 (YNNN). The segment at 412–488 (EEYDGGGGNN…NKRADEEWLA (77 aa)) is dispensable for NMR function. The disordered stretch occupies residues 422 to 488 (IGNNHNNHHQ…NKRADEEWLA (67 aa)). Over residues 438–459 (HQNGHQNGHNGINGHIVNGGVD) the composition is skewed to low complexity. Over residues 460-473 (SESEEEDSDSDDEG) the composition is skewed to acidic residues.

This sequence belongs to the NmrA-type oxidoreductase family. Interacts with nit-2.

Its subcellular location is the nucleus. May be a redox sensor protein. Negative transcriptional regulator involved in the post-transcriptional modulation of the GATA-type transcription factor nit-2, forming part of a system controlling nitrogen metabolite repression. The sequence is that of Nitrogen metabolite repression protein nmr (nmr) from Neurospora crassa (strain ATCC 24698 / 74-OR23-1A / CBS 708.71 / DSM 1257 / FGSC 987).